The primary structure comprises 641 residues: Forkhead box protein P4 (641 aa).

Disordered stretches follow at residues 1 to 43 (MMVE…NGEL) and 239 to 264 (SFPT…RRES). Polar residues-rich tracts occupy residues 8-27 (IRST…QSDS) and 239-259 (SFPT…NGQN). The C2H2-type zinc-finger motif lies at 278-303 (GECRWPGCEALCEDMGQFIKHLNTEH). Residues 320–341 (VQQLEIQLAKESERLQAMMTHL) form a leucine-zipper region. The interval 354-358 (PLNLV) is ctbp1-binding. The segment at residues 436–526 (RPPFTYASLI…PPKMTGSPTL (91 aa)) is a DNA-binding region (fork-head). Residues 563 to 641 (SSGSVLHGGH…ESESPMEDLP (79 aa)) are disordered. Residues 576–599 (TSTGEPGNSNGSSPRLSPQYSQSI) show a composition bias toward polar residues. A compositionally biased stretch (basic and acidic residues) spans 600 to 611 (HVKEEPAEDDVR). Residues 629-641 (RDLESESPMEDLP) show a composition bias toward acidic residues.

Dimerization is required for DNA-binding. First expressed in the anterior neural field of stage 15 embryos. At stage 18, localized in three domains of the brain (rostral forebrain, midbrain and hindbrain) and in the eye anlage. Cerebral and retinal expression persists at later stages with additional expression in the branchial arches, at the base of the hatching gland, and in the pancreas.

It localises to the nucleus. Transcriptional repressor. This Xenopus laevis (African clawed frog) protein is Forkhead box protein P4.